A 300-amino-acid polypeptide reads, in one-letter code: Ribonuclease HIII (300 aa).

In terms of domain architecture, RNase H type-2 spans 83–300 (IPIIGSDEVG…THKAQALLTK (218 aa)). 3 residues coordinate a divalent metal cation: Asp-89, Glu-90, and Asp-194.

This sequence belongs to the RNase HII family. RnhC subfamily. Requires Mn(2+) as cofactor. Mg(2+) serves as cofactor.

The protein localises to the cytoplasm. The catalysed reaction is Endonucleolytic cleavage to 5'-phosphomonoester.. Functionally, endonuclease that specifically degrades the RNA of RNA-DNA hybrids. The chain is Ribonuclease HIII from Streptococcus pyogenes serotype M5 (strain Manfredo).